The following is a 305-amino-acid chain: Protoheme IX farnesyltransferase (305 aa).

The next 9 helical transmembrane spans lie at 31–51, 52–72, 102–119, 123–145, 151–171, 179–199, 218–238, 240–260, and 281–301; these read VMSLVMFTGFVGMWLAPYSVH, PFIAVIVLACISLGAGSAGAI, ALSFGLITGFFAVFFMAL, LLASFLLLFTIFYYICIYTIWLK, NIVIGGVSGALPPVIGYAAVS, IILFLIIFIWTPPHSWALALF, ILYTKEQILIYSILLFLVSLM, FFIGMNNFIYLIIAGMLGLVF, and FAYSIFYLFFIFLLLSSTSTI.

Belongs to the UbiA prenyltransferase family. Protoheme IX farnesyltransferase subfamily.

It localises to the cell inner membrane. It carries out the reaction heme b + (2E,6E)-farnesyl diphosphate + H2O = Fe(II)-heme o + diphosphate. The protein operates within porphyrin-containing compound metabolism; heme O biosynthesis; heme O from protoheme: step 1/1. In terms of biological role, converts heme B (protoheme IX) to heme O by substitution of the vinyl group on carbon 2 of heme B porphyrin ring with a hydroxyethyl farnesyl side group. The sequence is that of Protoheme IX farnesyltransferase from Rickettsia akari (strain Hartford).